The chain runs to 116 residues: MANHFRTDRVGMEIKREVNEILQKKVRDPRVQGVTIIDVQMLGDLSVAKVYYTILSNLASDNQKAQIGLEKATGTIKRELGRNLKLYKIPDLTFVKDESIEYGNKIDEMLRNLDKN.

The protein belongs to the RbfA family. In terms of assembly, monomer. Binds 30S ribosomal subunits, but not 50S ribosomal subunits or 70S ribosomes.

The protein localises to the cytoplasm. In terms of biological role, one of several proteins that assist in the late maturation steps of the functional core of the 30S ribosomal subunit. Associates with free 30S ribosomal subunits (but not with 30S subunits that are part of 70S ribosomes or polysomes). Required for efficient processing of 16S rRNA. May interact with the 5'-terminal helix region of 16S rRNA. This Streptococcus pneumoniae serotype 4 (strain ATCC BAA-334 / TIGR4) protein is Ribosome-binding factor A.